The sequence spans 457 residues: Angiopoietin-related protein 6 (457 aa).

An N-terminal signal peptide occupies residues M1–A24. Coiled coils occupy residues D51–E77 and L126–S164. A disordered region spans residues S201–A235. N202 carries an N-linked (GlcNAc...) asparagine glycan. The span at R205 to S218 shows a compositional bias: basic and acidic residues. Polar residues predominate over residues L219–L229. One can recognise a Fibrinogen C-terminal domain in the interval T238 to R456. 2 disulfides stabilise this stretch: C247/C274 and C397/C410.

As to expression, highly expressed in the liver, specifically in hepatocytes, and weakly in the heart. Expressed in hematopoietic cells, platelets and mast cells, and detected at wounded skin.

It is found in the secreted. In terms of biological role, may play a role in the wound healing process. May promote epidermal proliferation, remodeling and regeneration. May promote the chemotactic activity of endothelial cells and induce neovascularization. May counteract high-fat diet-induced obesity and related insulin resistance through increased energy expenditure. In Mus musculus (Mouse), this protein is Angiopoietin-related protein 6 (Angptl6).